A 291-amino-acid polypeptide reads, in one-letter code: 4-diphosphocytidyl-2-C-methyl-D-erythritol kinase (291 aa).

The active site involves Lys10. 99–109 (PMGGGLGGGSS) serves as a coordination point for ATP. Asp141 is an active-site residue.

It belongs to the GHMP kinase family. IspE subfamily. Homodimer.

The catalysed reaction is 4-CDP-2-C-methyl-D-erythritol + ATP = 4-CDP-2-C-methyl-D-erythritol 2-phosphate + ADP + H(+). The protein operates within isoprenoid biosynthesis; isopentenyl diphosphate biosynthesis via DXP pathway; isopentenyl diphosphate from 1-deoxy-D-xylulose 5-phosphate: step 3/6. Its function is as follows. Catalyzes the phosphorylation of the position 2 hydroxy group of 4-diphosphocytidyl-2C-methyl-D-erythritol. In Photorhabdus laumondii subsp. laumondii (strain DSM 15139 / CIP 105565 / TT01) (Photorhabdus luminescens subsp. laumondii), this protein is 4-diphosphocytidyl-2-C-methyl-D-erythritol kinase.